The following is a 140-amino-acid chain: Endoribonuclease YbeY (140 aa).

Histidine 105, histidine 109, and aspartate 115 together coordinate Zn(2+).

The protein belongs to the endoribonuclease YbeY family. The cofactor is Zn(2+).

The protein localises to the cytoplasm. Its function is as follows. Single strand-specific metallo-endoribonuclease involved in late-stage 70S ribosome quality control and in maturation of the 3' terminus of the 16S rRNA. The polypeptide is Endoribonuclease YbeY (Flavobacterium psychrophilum (strain ATCC 49511 / DSM 21280 / CIP 103535 / JIP02/86)).